The chain runs to 229 residues: Cytosolic-abundant heat soluble protein 107838 (229 aa).

The disordered stretch occupies residues Met1 to Glu29. Residues Leu109–Arg145 are a coiled coil. CAHS motif regions lie at residues Tyr124–Gln142 and Gln161–Glu179. The segment covering Ser202 to Gln218 has biased composition (polar residues). Residues Ser202–Gln229 form a disordered region. Residues Lys219–Gln229 are compositionally biased toward basic and acidic residues.

This sequence belongs to the Cytosolic-abundant heat soluble protein (CAHS) family.

It localises to the cytoplasm. Its function is as follows. CAHS proteins are cytosolic heat soluble proteins that seem to contribute to the anhydrobiosis in tardigrades, but their specific mechanisms are yet to be identified. It is possible that protection during anhydrobiosis might occur via the stabilization of vitrifying small molecules such as sugars, but not via the direct glass transition of CAHS proteins themselves. This chain is Cytosolic-abundant heat soluble protein 107838, found in Paramacrobiotus richtersi (Water bear).